Here is a 287-residue protein sequence, read N- to C-terminus: MTLPASPPRYAVIGNPIAHSRSPQIHAMFSAQTGRPLRYERLLAPVDGFLPTVQAFRESGGLGLNVTVPFKLEAYALAEARLSERARLAGAVNTLSWRDGAWHGCNTDGVGLVNDLLRLGVALAGARVLLVGAGGAARGVLQPLAAAGCARIHIVNRTAARAAELAAAWRAAAPRTGTQVSAGALAQAAEPGGWDVAINATASGLQDAAPDLPGGLYAPDALAYDMMYGARPTAFMRQAEADGAARCADGLGMLVGQAAESFHIWHGVRPDPGPVLLALRTELLAAG.

Residues 20 to 22 and Thr-67 each bind shikimate; that span reads SRS. Lys-71 serves as the catalytic Proton acceptor. Glu-84 lines the NADP(+) pocket. Shikimate is bound by residues Asn-93 and Asp-108. NADP(+)-binding positions include 132-136, 156-161, and Met-226; these read GAGGA and NRTAAR. Position 228 (Tyr-228) interacts with shikimate. Gly-250 provides a ligand contact to NADP(+).

The protein belongs to the shikimate dehydrogenase family. In terms of assembly, homodimer.

The catalysed reaction is shikimate + NADP(+) = 3-dehydroshikimate + NADPH + H(+). It participates in metabolic intermediate biosynthesis; chorismate biosynthesis; chorismate from D-erythrose 4-phosphate and phosphoenolpyruvate: step 4/7. In terms of biological role, involved in the biosynthesis of the chorismate, which leads to the biosynthesis of aromatic amino acids. Catalyzes the reversible NADPH linked reduction of 3-dehydroshikimate (DHSA) to yield shikimate (SA). In Bordetella bronchiseptica (strain ATCC BAA-588 / NCTC 13252 / RB50) (Alcaligenes bronchisepticus), this protein is Shikimate dehydrogenase (NADP(+)).